Reading from the N-terminus, the 429-residue chain is S-adenosylmethionine synthase (429 aa).

Residue histidine 14 participates in ATP binding. Residue aspartate 16 coordinates Mg(2+). Residue glutamate 42 participates in K(+) binding. The L-methionine site is built by glutamate 55 and glutamine 98. Residues 98 to 108 (QSADINRGVDR) are flexible loop. Residues 165–167 (DAK), 252–253 (KF), aspartate 261, 267–268 (RK), alanine 284, and lysine 288 each bind ATP. L-methionine is bound at residue aspartate 261. Residue lysine 292 coordinates L-methionine.

The protein belongs to the AdoMet synthase family. In terms of assembly, homotetramer; dimer of dimers. Mg(2+) is required as a cofactor. K(+) serves as cofactor.

It localises to the cytoplasm. The catalysed reaction is L-methionine + ATP + H2O = S-adenosyl-L-methionine + phosphate + diphosphate. The protein operates within amino-acid biosynthesis; S-adenosyl-L-methionine biosynthesis; S-adenosyl-L-methionine from L-methionine: step 1/1. In terms of biological role, catalyzes the formation of S-adenosylmethionine (AdoMet) from methionine and ATP. The overall synthetic reaction is composed of two sequential steps, AdoMet formation and the subsequent tripolyphosphate hydrolysis which occurs prior to release of AdoMet from the enzyme. The polypeptide is S-adenosylmethionine synthase (Porphyromonas gingivalis (strain ATCC BAA-308 / W83)).